Consider the following 157-residue polypeptide: Endoribonuclease YbeY (157 aa).

Residues His116, His120, and His126 each contribute to the Zn(2+) site.

It belongs to the endoribonuclease YbeY family. Zn(2+) serves as cofactor.

Its subcellular location is the cytoplasm. In terms of biological role, single strand-specific metallo-endoribonuclease involved in late-stage 70S ribosome quality control and in maturation of the 3' terminus of the 16S rRNA. The chain is Endoribonuclease YbeY from Paenarthrobacter aurescens (strain TC1).